Here is a 382-residue protein sequence, read N- to C-terminus: Opsin-VA (382 aa).

Topologically, residues 1–35 (MELFPVAVNGVSHAEDPFSGPLTFIAPWNYKVLAT) are extracellular. A helical membrane pass occupies residues 36–56 (LMFVVTAASLSENFAVMLVTF). The Cytoplasmic segment spans residues 57 to 67 (RFTQLRKPLNY). The helical transmembrane segment at 68–88 (IIVNLSLADFLVSLTGGTISF) threads the bilayer. Topologically, residues 89 to 103 (LTNYHGYFFLGKWAC) are extracellular. A disulfide bridge connects residues C103 and C180. The chain crosses the membrane as a helical span at residues 104–124 (VLEGFAVTYFGIVALWSLAVL). Residues 125-147 (AFERFFVICRPLGNIRLRGKHAA) are Cytoplasmic-facing. A helical membrane pass occupies residues 148 to 168 (LGLLFVWTFSFIWTIPPVLGW). Topologically, residues 169 to 193 (SSYTVSKIGTTCEPNWYSGNFHDHT) are extracellular. The chain crosses the membrane as a helical span at residues 194–214 (FIIAFFITCFILPLGVIVVCY). Over 215–244 (CKLIKKLRKVSNTHGRLGNARKPERQVTRM) the chain is Cytoplasmic. Residues 245–265 (VVVMIVAFMVAWTPYAAFSIV) form a helical membrane-spanning segment. Over 266-279 (VTAHPSIHLDPRLA) the chain is Extracellular. The helical transmembrane segment at 280–300 (AAPAFFSKTAAVYNPVIYVFM) threads the bilayer. At K287 the chain carries N6-(retinylidene)lysine. At 301 to 382 (NKQFRKCLVQ…PIPENKVCPM (82 aa)) the chain is on the cytoplasmic side. The span at 330 to 346 (RQGMTNESHTGEMSTIA) shows a compositional bias: polar residues. The tract at residues 330–371 (RQGMTNESHTGEMSTIASRIPKDGSIPEKTQEHPGERRSLAH) is disordered. Residues 349-368 (IPKDGSIPEKTQEHPGERRS) are compositionally biased toward basic and acidic residues.

Belongs to the G-protein coupled receptor 1 family. Opsin subfamily. In terms of tissue distribution, expressed in a subset of retinal horizontal cells as well as in retinal ganglion cells.

It is found in the membrane. The chain is Opsin-VA from Rutilus rutilus (Roach).